A 452-amino-acid chain; its full sequence is Ribosomal protein uS12 methylthiotransferase RimO (452 aa).

Positions 5–116 (PTIAFSHLGC…IVDVLQRTES (112 aa)) constitute an MTTase N-terminal domain. 6 residues coordinate [4Fe-4S] cluster: C14, C50, C79, C154, C158, and C161. The region spanning 140–369 (TTTSAVAYLR…MATQQPIAER (230 aa)) is the Radical SAM core domain. The region spanning 372-438 (RAQIGRLVDV…IYDLHGEVAS (67 aa)) is the TRAM domain.

This sequence belongs to the methylthiotransferase family. RimO subfamily. [4Fe-4S] cluster is required as a cofactor.

Its subcellular location is the cytoplasm. The catalysed reaction is L-aspartate(89)-[ribosomal protein uS12]-hydrogen + (sulfur carrier)-SH + AH2 + 2 S-adenosyl-L-methionine = 3-methylsulfanyl-L-aspartate(89)-[ribosomal protein uS12]-hydrogen + (sulfur carrier)-H + 5'-deoxyadenosine + L-methionine + A + S-adenosyl-L-homocysteine + 2 H(+). Functionally, catalyzes the methylthiolation of an aspartic acid residue of ribosomal protein uS12. In Synechococcus elongatus (strain ATCC 33912 / PCC 7942 / FACHB-805) (Anacystis nidulans R2), this protein is Ribosomal protein uS12 methylthiotransferase RimO.